A 364-amino-acid chain; its full sequence is Lysophosphatidic acid receptor 1 (364 aa).

Topologically, residues 1–50 (MAAAFTSSPVVSQPQFTAMNEQQCFSNESIAFFYNRSGKYLATEWNTVTK) are extracellular. Cystine bridges form between C24–C190 and C188–C195. N-linked (GlcNAc...) asparagine glycosylation is found at N27 and N35. K39 contributes to the a 1-acyl-sn-glycero-3-phosphate binding site. Residues 51-75 (LVMGLGITVCIFIMLANLLVMVAIY) traverse the membrane as a helical segment. Over 76-83 (VNRRFHFP) the chain is Cytoplasmic. A helical membrane pass occupies residues 84–107 (IYYLMANLAAADFFAGLAYFYLMF). The Extracellular portion of the chain corresponds to 108 to 121 (NTGPNTRRLTVSTW). A helical transmembrane segment spans residues 122-144 (LLRQGLIDTSLTVSVANLLAIAI). 124 to 129 (RQGLID) contacts a 1-acyl-sn-glycero-3-phosphate. The Cytoplasmic portion of the chain corresponds to 145–163 (ERHITVFRMQLHARMSNRR). Residues 164–184 (VVVVIVVIWTMAIVMGAIPSV) form a helical membrane-spanning segment. Residues 185 to 204 (GWNCICDIENCSNMAPLYSD) lie on the Extracellular side of the membrane. Residues 205–225 (SYLVFWAIFNLVTFVVMVVLY) form a helical membrane-spanning segment. W210 is an a 1-acyl-sn-glycero-3-phosphate binding site. Residues 226–255 (AHIFGYVRQRTMRMSRHSSGPRRNRDTMMS) are Cytoplasmic-facing. A helical membrane pass occupies residues 256–280 (LLKTVVIVLGAFIICWTPGLVLLLL). Over 281 to 294 (DVCCPQCDVLAYEK) the chain is Extracellular. A disulfide bond links C284 and C287. Residues 295-315 (FFLLLAEFNSAMNPIIYSYRD) traverse the membrane as a helical segment. Residues 316–364 (KEMSATFRQILCCQRSENTSGPTEGSDRSASSLNHTILAGVHSNDHSVV) are Cytoplasmic-facing. Residue S341 is modified to Phosphoserine. T351 is subject to Phosphothreonine.

It belongs to the G-protein coupled receptor 1 family. As to quaternary structure, interacts with RALA and GRK2. Interacts with GNAQ and GNA13. Interacts with CD14; the interaction is enhanced by exposure to bacterial lipopolysaccharide (LPS). N-glycosylated.

The protein resides in the cell surface. It is found in the cell membrane. Its subcellular location is the endosome. Receptor for lysophosphatidic acid (LPA). Plays a role in the reorganization of the actin cytoskeleton, cell migration, differentiation and proliferation, and thereby contributes to the responses to tissue damage and infectious agents. Activates downstream signaling cascades via the G(i)/G(o), G(12)/G(13), and G(q) families of heteromeric G proteins. Signaling inhibits adenylyl cyclase activity and decreases cellular cAMP levels. Signaling triggers an increase of cytoplasmic Ca(2+) levels. Activates RALA; this leads to the activation of phospholipase C (PLC) and the formation of inositol 1,4,5-trisphosphate. Signaling mediates activation of down-stream MAP kinases. Contributes to the regulation of cell shape. Promotes Rho-dependent reorganization of the actin cytoskeleton in neuronal cells and neurite retraction. Promotes the activation of Rho and the formation of actin stress fibers. Promotes formation of lamellipodia at the leading edge of migrating cells via activation of RAC1. Through its function as LPA receptor, plays a role in chemotaxis and cell migration, including responses to injury and wounding. Plays a role in triggering inflammation in response to bacterial lipopolysaccharide (LPS) via its interaction with CD14. Promotes cell proliferation in response to LPA. Inhibits the intracellular ciliogenesis pathway in response to LPA and through AKT1 activation. Required for normal skeleton development. May play a role in osteoblast differentiation. Required for normal brain development. Required for normal proliferation, survival and maturation of newly formed neurons in the adult dentate gyrus. Plays a role in pain perception and in the initiation of neuropathic pain. In Bos taurus (Bovine), this protein is Lysophosphatidic acid receptor 1 (LPAR1).